The primary structure comprises 292 residues: 4-hydroxy-tetrahydrodipicolinate synthase (292 aa).

Pyruvate is bound at residue threonine 45. Tyrosine 133 functions as the Proton donor/acceptor in the catalytic mechanism. Residue lysine 161 is the Schiff-base intermediate with substrate of the active site. A pyruvate-binding site is contributed by isoleucine 203.

It belongs to the DapA family. Homodimer.

Its subcellular location is the cytoplasm. It catalyses the reaction L-aspartate 4-semialdehyde + pyruvate = (2S,4S)-4-hydroxy-2,3,4,5-tetrahydrodipicolinate + H2O + H(+). It functions in the pathway amino-acid biosynthesis; L-lysine biosynthesis via DAP pathway; (S)-tetrahydrodipicolinate from L-aspartate: step 3/4. In terms of biological role, catalyzes the condensation of (S)-aspartate-beta-semialdehyde [(S)-ASA] and pyruvate to 4-hydroxy-tetrahydrodipicolinate (HTPA). The sequence is that of 4-hydroxy-tetrahydrodipicolinate synthase from Ectopseudomonas mendocina (strain ymp) (Pseudomonas mendocina).